The primary structure comprises 450 residues: Homogentisate 1,2-dioxygenase (450 aa).

H304 (proton acceptor) is an active-site residue. Residues H347 and E353 each coordinate Fe cation. Residues Y362 and H383 each coordinate homogentisate. Position 383 (H383) interacts with Fe cation.

The protein belongs to the homogentisate dioxygenase family. As to quaternary structure, hexamer; dimer of trimers. Fe cation serves as cofactor.

The enzyme catalyses homogentisate + O2 = 4-maleylacetoacetate + H(+). The protein operates within amino-acid degradation; L-phenylalanine degradation; acetoacetate and fumarate from L-phenylalanine: step 4/6. Its function is as follows. Involved in the catabolism of homogentisate (2,5-dihydroxyphenylacetate or 2,5-OH-PhAc), a central intermediate in the degradation of phenylalanine and tyrosine. Catalyzes the oxidative ring cleavage of the aromatic ring of homogentisate to yield maleylacetoacetate. The protein is Homogentisate 1,2-dioxygenase of Burkholderia mallei (strain NCTC 10229).